We begin with the raw amino-acid sequence, 391 residues long: Formate-dependent phosphoribosylglycinamide formyltransferase (391 aa).

N(1)-(5-phospho-beta-D-ribosyl)glycinamide contacts are provided by residues 20–21 and glutamate 80; that span reads EL. ATP contacts are provided by residues arginine 112, lysine 153, 158-163, 193-196, and glutamate 201; these read SSGKGQ and EGFV. The ATP-grasp domain maps to 117–306; the sequence is RLAAETLGLP…EFALHVRAIL (190 aa). Mg(2+) is bound by residues glutamate 265 and glutamate 277. N(1)-(5-phospho-beta-D-ribosyl)glycinamide is bound by residues aspartate 284, lysine 354, and 361–362; that span reads RR.

This sequence belongs to the PurK/PurT family. In terms of assembly, homodimer.

It carries out the reaction N(1)-(5-phospho-beta-D-ribosyl)glycinamide + formate + ATP = N(2)-formyl-N(1)-(5-phospho-beta-D-ribosyl)glycinamide + ADP + phosphate + H(+). The protein operates within purine metabolism; IMP biosynthesis via de novo pathway; N(2)-formyl-N(1)-(5-phospho-D-ribosyl)glycinamide from N(1)-(5-phospho-D-ribosyl)glycinamide (formate route): step 1/1. Its function is as follows. Involved in the de novo purine biosynthesis. Catalyzes the transfer of formate to 5-phospho-ribosyl-glycinamide (GAR), producing 5-phospho-ribosyl-N-formylglycinamide (FGAR). Formate is provided by PurU via hydrolysis of 10-formyl-tetrahydrofolate. This Shewanella putrefaciens (strain CN-32 / ATCC BAA-453) protein is Formate-dependent phosphoribosylglycinamide formyltransferase.